The primary structure comprises 221 residues: MARKKLMRFKWNEEVHNLFQPEKENYKAYKGKWHEYFKNDNPVILEVGCGRAEYTTGLAALFPENNYIGLDIKGARLWKGSSLSIETGLTNTAFIRTKLQNLEEFFEPGEVKGIWITFPDPKPRESEAKLRLSGLRFMNIYRRLMPAGGKVFFKTDNRVLFDHTLEVLTDQTLKIKDLVFTHDLYQSPLLAEHYGIQTTYEKTYLNQGVQINYLKFEFLPL.

Residues Glu-46, Asp-71, and Asp-120 each coordinate S-adenosyl-L-methionine. Residue Asp-120 is part of the active site. Asp-156 is a substrate binding site.

The protein belongs to the class I-like SAM-binding methyltransferase superfamily. TrmB family.

It carries out the reaction guanosine(46) in tRNA + S-adenosyl-L-methionine = N(7)-methylguanosine(46) in tRNA + S-adenosyl-L-homocysteine. The protein operates within tRNA modification; N(7)-methylguanine-tRNA biosynthesis. Functionally, catalyzes the formation of N(7)-methylguanine at position 46 (m7G46) in tRNA. The sequence is that of tRNA (guanine-N(7)-)-methyltransferase from Cytophaga hutchinsonii (strain ATCC 33406 / DSM 1761 / CIP 103989 / NBRC 15051 / NCIMB 9469 / D465).